The chain runs to 627 residues: (-)-beta-pinene synthase 1, chloroplastic (627 aa).

Residues 1-50 constitute a chloroplast transit peptide; the sequence is MDLISVLPSTSKSCVCLHKPLSSSTHKLKPFCRTIRILGMPRPRKSVLMA. The Mg(2+) site is built by aspartate 378, aspartate 382, and aspartate 530. The DDXXD motif signature appears at 378–382; sequence DDMYD.

This sequence belongs to the terpene synthase family. Tpsd subfamily. The cofactor is Mg(2+). It depends on Mn(2+) as a cofactor.

The protein localises to the plastid. Its subcellular location is the chloroplast. It carries out the reaction (2E)-geranyl diphosphate = (1S,5S)-beta-pinene + diphosphate. The enzyme catalyses (2E)-geranyl diphosphate = (1S,5S)-alpha-pinene + diphosphate. It participates in terpene metabolism; oleoresin biosynthesis. It functions in the pathway secondary metabolite biosynthesis; terpenoid biosynthesis. Functionally, monoterpene synthase (TPS) involved in the biosynthesis of monoterpene natural products included in conifer oleoresin secretions and volatile emissions; these compounds contribute to biotic and abiotic stress defense against herbivores and pathogens. Catalyzes the conversion of (2E)-geranyl diphosphate (GPP) to (-)-beta-pinene and, to a lower extent, to (-)-alpha-pinene. The polypeptide is (-)-beta-pinene synthase 1, chloroplastic (Pinus contorta (Shore pine)).